Here is a 243-residue protein sequence, read N- to C-terminus: Small ribosomal subunit protein uS5 (243 aa).

Composition is skewed to basic and acidic residues over residues 1–21 (MPID…EGQK) and 34–46 (LEEK…DHKG). The interval 1–85 (MPIDKKQEKN…NFKKNANKKP (85 aa)) is disordered. The S5 DRBM domain occupies 89–152 (FEEKIVNIAR…KDAQNNLIRV (64 aa)).

This sequence belongs to the universal ribosomal protein uS5 family. Part of the 30S ribosomal subunit. Contacts proteins S4 and S8.

In terms of biological role, with S4 and S12 plays an important role in translational accuracy. Its function is as follows. Located at the back of the 30S subunit body where it stabilizes the conformation of the head with respect to the body. This chain is Small ribosomal subunit protein uS5, found in Mycoplasma mobile (strain ATCC 43663 / 163K / NCTC 11711) (Mesomycoplasma mobile).